The chain runs to 101 residues: NADH-quinone oxidoreductase subunit K (101 aa).

Helical transmembrane passes span 4–24 (LSHYLILGAVLFAISVVGIFL), 30–50 (IVLLMAIELMLLAVNLNFIAF), and 61–81 (VFVFFILTVAAAESAIGLAIL).

It belongs to the complex I subunit 4L family. As to quaternary structure, NDH-1 is composed of 14 different subunits. Subunits NuoA, H, J, K, L, M, N constitute the membrane sector of the complex.

Its subcellular location is the cell inner membrane. The catalysed reaction is a quinone + NADH + 5 H(+)(in) = a quinol + NAD(+) + 4 H(+)(out). Its function is as follows. NDH-1 shuttles electrons from NADH, via FMN and iron-sulfur (Fe-S) centers, to quinones in the respiratory chain. The immediate electron acceptor for the enzyme in this species is believed to be ubiquinone. Couples the redox reaction to proton translocation (for every two electrons transferred, four hydrogen ions are translocated across the cytoplasmic membrane), and thus conserves the redox energy in a proton gradient. This chain is NADH-quinone oxidoreductase subunit K, found in Azoarcus sp. (strain BH72).